Consider the following 152-residue polypeptide: Proteolipid protein 2 (152 aa).

In terms of domain architecture, MARVEL spans 19–138 (FSRTKKGILL…DAYITFPLKQ (120 aa)). Helical transmembrane passes span 25–45 (GILLFAEIILCLVILICFSAS), 48–68 (SAYSSLSVIEMICAAVLLVFY), 85–105 (DFFRSLIATILYLITSIVVLV), and 112–132 (RVVAGILGLLATLLFGYDAYI).

The protein resides in the membrane. Its function is as follows. May play a role in cell differentiation in the intestinal epithelium. The protein is Proteolipid protein 2 (Plp2) of Mus musculus (Mouse).